Consider the following 457-residue polypeptide: Paired box protein Pax-8 (457 aa).

The segment at residues 9–135 (GHGGLNQLGG…SSINRIIRTK (127 aa)) is a DNA-binding region (paired). The PAI subdomain stretch occupies residues 12 to 68 (GLNQLGGAFVNGRPLPEVVRQRIVDLAHQGVRPCDISRQLRVSHGCVSKILGRYYET). The segment at 87–135 (KVVEKIGDYKRQNPTMFAWEIRDRLLAEGVCDNDTVPSVSSINRIIRTK) is RED subdomain. Positions 159-182 (LIPSSAVTPPESPQSDSLGSTYSI) are enriched in polar residues. The tract at residues 159–226 (LIPSSAVTPP…SSGPRKHLRT (68 aa)) is disordered. Ser304 is subject to Phosphoserine.

In terms of assembly, interacts with WWTR1.

The protein resides in the nucleus. In terms of biological role, thought to encode a transcription factor. It may have a role in kidney cell differentiation. May play a regulatory role in mammalian development. The chain is Paired box protein Pax-8 (Pax8) from Rattus norvegicus (Rat).